Reading from the N-terminus, the 374-residue chain is Actin-related protein 2/3 complex subunit 2B (374 aa).

This sequence belongs to the ARPC2 family. As to quaternary structure, component of the Arp2/3 complex composed of ARP2, ARP3, ARPC1/p41-ARC, ARPC2/p34-ARC, ARPC3/p21-ARC, ARPC4/p20-ARC and ARPC5/p16-ARC. Expressed at low levels in all tissues with a relatively highest expression in inflorescences.

It is found in the cytoplasm. Its subcellular location is the cytoskeleton. It localises to the cell projection. In terms of biological role, functions as actin-binding component of the Arp2/3 complex which is involved in regulation of actin polymerization and together with an activating nucleation-promoting factor (NPF) mediates the formation of branched actin networks. Seems to contact the mother actin filament. Arp2/3 complex plays a critical role in the control of cell morphogenesis via the modulation of cell polarity development. The polypeptide is Actin-related protein 2/3 complex subunit 2B (ARPC2B) (Arabidopsis thaliana (Mouse-ear cress)).